A 1021-amino-acid chain; its full sequence is tRNA wybutosine-synthesizing protein 4 (1021 aa).

S-adenosyl-L-methionine is bound by residues arginine 68, aspartate 122, 171–172 (DL), and glutamate 198. A JmjC domain is found at 826–980 (PTEAPANLAE…STGRDVYGNR (155 aa)).

Belongs to the methyltransferase superfamily. LCMT family.

It carries out the reaction 7-[(3S)-3-amino-3-carboxypropyl]wyosine(37) in tRNA(Phe) + S-adenosyl-L-methionine = 7-[(3S)-(3-amino-3-methoxycarbonyl)propyl]wyosine(37) in tRNA(Phe) + S-adenosyl-L-homocysteine. The catalysed reaction is 7-[(3S)-(3-amino-3-methoxycarbonyl)propyl]wyosine(37) in tRNA(Phe) + S-adenosyl-L-methionine + CO2 = wybutosine(37) in tRNA(Phe) + S-adenosyl-L-homocysteine + 2 H(+). Its pathway is tRNA modification; wybutosine-tRNA(Phe) biosynthesis. Its function is as follows. Probable S-adenosyl-L-methionine-dependent methyltransferase that acts as a component of the wybutosine biosynthesis pathway. Wybutosine is a hyper modified guanosine with a tricyclic base found at the 3'-position adjacent to the anticodon of eukaryotic phenylalanine tRNA. May methylate the carboxyl group of leucine residues to form alpha-leucine ester residues. This Gibberella zeae (strain ATCC MYA-4620 / CBS 123657 / FGSC 9075 / NRRL 31084 / PH-1) (Wheat head blight fungus) protein is tRNA wybutosine-synthesizing protein 4 (PPM2).